A 265-amino-acid chain; its full sequence is Expansin-like A2 (265 aa).

The first 21 residues, 1 to 21 (MLQGFLFLLSVVLLFSSSAAA), serve as a signal peptide directing secretion. Positions 42 to 148 (SGACAYGSMA…RRVPCDYGNK (107 aa)) constitute an Expansin-like EG45 domain. N100 and N103 each carry an N-linked (GlcNAc...) asparagine glycan. The Expansin-like CBD domain occupies 162 to 244 (NYLAIKLLYQ…NWEAGKSYDA (83 aa)).

This sequence belongs to the expansin family. Expansin-like A subfamily.

It is found in the secreted. The protein is Expansin-like A2 (EXLA2) of Arabidopsis thaliana (Mouse-ear cress).